The following is a 502-amino-acid chain: DnaJ homolog subfamily C member 3 homolog (502 aa).

The N-terminal stretch at Met1–Ala25 is a signal peptide. TPR repeat units follow at residues Ile29–Asp62, Val69–Asn102, Ile103–Asn136, Lys184–Ser217, Val218–Asn251, Phe264–Ser297, Thr302–Asn335, and Ala336–Asp369. N-linked (GlcNAc...) asparagine glycosylation is present at Asn51. Cys309 and Cys325 form a disulfide bridge. The region spanning Asp390 to Glu457 is the J domain.

The protein localises to the secreted. Its subcellular location is the endoplasmic reticulum lumen. In terms of biological role, may be involved in the unfolded protein response (UPR) during ER stress. The polypeptide is DnaJ homolog subfamily C member 3 homolog (dnajc3) (Dictyostelium discoideum (Social amoeba)).